A 128-amino-acid chain; its full sequence is Translation initiation factor 5A (128 aa).

Lysine 35 is subject to Hypusine.

Belongs to the eIF-5A family.

The protein localises to the cytoplasm. Its function is as follows. Functions by promoting the formation of the first peptide bond. The polypeptide is Translation initiation factor 5A (Methanosarcina barkeri (strain Fusaro / DSM 804)).